Consider the following 178-residue polypeptide: uncharacterized protein (178 aa).

It belongs to the mycobacterial PPE family.

This is an uncharacterized protein from Mycobacterium tuberculosis (strain CDC 1551 / Oshkosh).